The sequence spans 126 residues: Large ribosomal subunit protein bL19 (126 aa).

It belongs to the bacterial ribosomal protein bL19 family.

Its function is as follows. This protein is located at the 30S-50S ribosomal subunit interface and may play a role in the structure and function of the aminoacyl-tRNA binding site. The chain is Large ribosomal subunit protein bL19 from Paracoccus denitrificans (strain Pd 1222).